The sequence spans 510 residues: Protein ERGIC-53 (510 aa).

The N-terminal stretch at 1 to 30 (MAGSRQRGLRARVRPLFCALLLSLGRFVRG) is a signal peptide. At 31–477 (DGVGGDPAVA…ELPPFPSCLS (447 aa)) the chain is on the lumenal side. Residues 44–267 (RRFEYKYSFK…DVLSFLTFQL (224 aa)) enclose the L-type lectin-like domain. Ser-88 and Asp-121 together coordinate a carbohydrate. Positions 152, 154, and 156 each coordinate Ca(2+). A carbohydrate is bound by residues Asn-156 and His-178. Asp-181 provides a ligand contact to Ca(2+). A disulfide bond links Cys-190 and Cys-230. 251–253 (GGL) contributes to the a carbohydrate binding site. Ser-425 bears the Phosphoserine mark. A helical transmembrane segment spans residues 478–498 (TVHFIIFVVVQTVLFIGYIMY). Residues 499–510 (RSQQEAAAKKFF) are Cytoplasmic-facing. A mediates interaction with RAB3GAP1, RAB3GAP2 and UBXN6 region spans residues 499–510 (RSQQEAAAKKFF). The ER export motif motif lies at 509–510 (FF).

In terms of assembly, exists both as a covalent disulfide-linked homohexamer, and a complex of three disulfide-linked dimers non-covalently kept together. Interacts with MCFD2. May interact with TMEM115. Interacts with RAB3GAP1 and RAB3GAP2. Interacts with UBXN6. Interacts with SERPINA1/alpha1-antitrypsin. Interacts with BET1. In terms of processing, the N-terminal may be partly blocked. In terms of tissue distribution, ubiquitous.

The protein localises to the endoplasmic reticulum-Golgi intermediate compartment membrane. It localises to the golgi apparatus membrane. It is found in the endoplasmic reticulum membrane. Mannose-specific lectin. May recognize sugar residues of glycoproteins, glycolipids, or glycosylphosphatidyl inositol anchors and may be involved in the sorting or recycling of proteins, lipids, or both. The LMAN1-MCFD2 complex forms a specific cargo receptor for the ER-to-Golgi transport of selected proteins. The protein is Protein ERGIC-53 (LMAN1) of Homo sapiens (Human).